Consider the following 1031-residue polypeptide: Toll-like receptor 9 (1031 aa).

The first 25 residues, 1–25 (MGPCHGALQPLSLLVQAAMLAVALA), serve as a signal peptide directing secretion. The Extracellular segment spans residues 26-817 (QGTLPPFLPC…LCLDESLSWD (792 aa)). The cysteines at positions 35 and 45 are disulfide-linked. 47 to 51 (WLFLK) is a DNA binding site. LRR repeat units follow at residues 62-85 (RDNV…DFAQ), 87-110 (SNLQ…HFPC), 122-147 (VPTL…SLVS), 150-166 (LSRT…LTGL), 167-190 (HALR…ALEV), 198-221 (LGNL…LPPS), 223-242 (EYLL…DLAN), 243-268 (LTAL…CVEC), 283-306 (LSRL…WFRG), 308-332 (GNLT…AFQG), 333-356 (LAQL…HLTL), 363-386 (LLSL…TLQP), 390-413 (LPML…IFKD), 414-438 (FPGL…ATTG), 470-494 (CKNL…MFAQ), 496-519 (SRLQ…QFVP), 520-543 (LTSL…SFTE), 545-567 (PRLE…VGHN), 574-598 (LPTL…LCST), 600-622 (LWAL…LYLR), 627-650 (LRSL…TLGN), 652-675 (PKSL…SLTL), 676-699 (LPNL…SLPS), 701-723 (TQLQ…FFAL), 724-747 (ATRL…WFGF), and 749-772 (AGSL…AFVD). Asparagine 64 carries an N-linked (GlcNAc...) asparagine glycan. DNA is bound by residues 72–77 (SNRIHH) and 95–109 (KWNC…MHFP). A disulfide bond links cysteine 98 and cysteine 110. Asparagine 129 carries N-linked (GlcNAc...) asparagine glycosylation. DNA is bound by residues tyrosine 132, arginine 152, and 179–181 (YYK). Residues cysteine 178 and cysteine 184 are joined by a disulfide bond. Asparagine 200 carries an N-linked (GlcNAc...) asparagine glycan. Tyrosine 208 lines the DNA pocket. Asparagine 210 and asparagine 242 each carry an N-linked (GlcNAc...) asparagine glycan. Cystine bridges form between cysteine 255–cysteine 268 and cysteine 258–cysteine 265. The S-palmitoyl cysteine moiety is linked to residue cysteine 258. Arginine 262 lines the DNA pocket. The S-palmitoyl cysteine moiety is linked to residue cysteine 265. N-linked (GlcNAc...) asparagine glycans are attached at residues asparagine 309 and asparagine 340. A disulfide bridge links cysteine 470 with cysteine 500. Residues asparagine 472 and asparagine 513 are each glycosylated (N-linked (GlcNAc...) asparagine). Residue asparagine 567 is glycosylated (N-linked (GlcNAc...) asparagine). N-linked (GlcNAc...) asparagine glycans are attached at residues asparagine 669 and asparagine 694. Residue asparagine 731 is glycosylated (N-linked (GlcNAc...) asparagine). Intrachain disulfides connect cysteine 764–cysteine 790 and cysteine 766–cysteine 809. A helical transmembrane segment spans residues 818 to 838 (CFGLSLLVVALGLAMPMLHHL). Residues 839 to 1031 (CGWDLWYCFH…NFCRGPTMAE (193 aa)) are Cytoplasmic-facing. The TIR domain maps to 866 to 1011 (LSYDAFVVFD…SFWAQLGMAL (146 aa)).

It belongs to the Toll-like receptor family. As to quaternary structure, monomer and homodimer. Exists as a monomer in the absence of unmethylated cytidine-phosphate-guanosine (CpG) ligand. Proteolytic processing of an insertion loop (Z-loop) is required for homodimerization upon binding to the unmethylated CpG ligand leading to its activation. Interacts with MYD88 via their respective TIR domains. Interacts with BTK. Interacts (via transmembrane domain) with UNC93B1. Interacts with CD300LH; the interaction may promote full activation of TLR9-triggered innate responses. Interacts with CNPY3 and HSP90B1; this interaction is required for proper folding in the endoplasmic reticulum. Interacts with SMPDL3B. Interacts with CD82; this interaction is essential for TLR9-dependent myddosome formation in response to CpG stimulation. Activated by proteolytic cleavage of the flexible loop between repeats LRR14 and LRR15 within the ectodomain. Cleavage requires UNC93B1. Proteolytically processed by first removing the majority of the ectodomain by either asparagine endopeptidase (AEP) or a cathepsin followed by a trimming event that is solely cathepsin mediated and required for optimal receptor signaling. In terms of processing, palmitoylated by ZDHHC3 in the Golgi regulates TLR9 trafficking from the Golgi to endosomes. Depalmitoylation by PPT1 controls the release of TLR9 from UNC93B1 in endosomes. As to expression, expressed in airway epithelium, vascular endothelium and inflammatory cells in blood vessels of the lungs (at protein level). Highly expressed in pulmonary intravascular macrophages (PIMs) and to a lesser extent in alveolar macrophages, neutrophiles, type-II alveolar epithelial cells and bronchial epithelial cells of the lungs (at protein level). High constitutive intracellular expression in leukocytes including polymorphonuclear leukocytes (PMNs), CD4 and CD8 T cells (at protein level). Expressed throughout the respiratory tract including larynx, upper, middle and lower trachea, and bronchus in isolated equine respiratory epithelial cells (ERECs) and in fully differentiated ERECs cultured at the air-fluid interface (AFI) (at protein level). Constitutively expressed in peripheral blood mononuclear cells (PBMCs), lymph nodes and spleen. The level of expression in PBMCs is about 2- to 3-fold higher than that in lymph nodes and spleen. Very low expression in liver, heart, lung, kidney, small intestine, colon and stomach. Low expression in the airway tissue epithelium of the larynx, upper trachea, middle tranchea, lower trachea, bronchus and spleen, and more abundant expression in mesenteric lymph node. Not expressed in fully differentiated bronchus epithelial cells cultured at the AFI for four weeks. Expressed in gingival tissue.

It localises to the endoplasmic reticulum membrane. Its subcellular location is the endosome. It is found in the lysosome. The protein resides in the cytoplasmic vesicle. The protein localises to the phagosome. It localises to the cell membrane. Its subcellular location is the cytoplasm. It is found in the nucleus. Key component of innate and adaptive immunity. TLRs (Toll-like receptors) control host immune response against pathogens through recognition of molecular patterns specific to microorganisms. TLR9 is a nucleotide-sensing TLR which is activated by unmethylated cytidine-phosphate-guanosine (CpG) dinucleotides. Acts via MYD88 and TRAF6, leading to NF-kappa-B activation, cytokine secretion and the inflammatory response. Upon CpG stimulation, induces B-cell proliferation, activation, survival and antibody production. In Equus caballus (Horse), this protein is Toll-like receptor 9.